The primary structure comprises 475 residues: Ribulose bisphosphate carboxylase large chain (475 aa).

A propeptide spanning residues 1-2 (MS) is cleaved from the precursor. P3 carries the N-acetylproline modification. The residue at position 14 (K14) is an N6,N6,N6-trimethyllysine. N123 and T173 together coordinate substrate. The active-site Proton acceptor is the K175. K177 contributes to the substrate binding site. Mg(2+) contacts are provided by K201, D203, and E204. K201 carries the post-translational modification N6-carboxylysine. Residue H294 is the Proton acceptor of the active site. Positions 295, 327, and 379 each coordinate substrate.

Belongs to the RuBisCO large chain family. Type I subfamily. As to quaternary structure, heterohexadecamer of 8 large chains and 8 small chains; disulfide-linked. The disulfide link is formed within the large subunit homodimers. Mg(2+) is required as a cofactor. The disulfide bond which can form in the large chain dimeric partners within the hexadecamer appears to be associated with oxidative stress and protein turnover.

Its subcellular location is the plastid. The protein localises to the chloroplast. It catalyses the reaction 2 (2R)-3-phosphoglycerate + 2 H(+) = D-ribulose 1,5-bisphosphate + CO2 + H2O. It carries out the reaction D-ribulose 1,5-bisphosphate + O2 = 2-phosphoglycolate + (2R)-3-phosphoglycerate + 2 H(+). In terms of biological role, ruBisCO catalyzes two reactions: the carboxylation of D-ribulose 1,5-bisphosphate, the primary event in carbon dioxide fixation, as well as the oxidative fragmentation of the pentose substrate in the photorespiration process. Both reactions occur simultaneously and in competition at the same active site. The polypeptide is Ribulose bisphosphate carboxylase large chain (Viscum album (European mistletoe)).